We begin with the raw amino-acid sequence, 1308 residues long: Misshapen-like kinase 1 (1308 aa).

A Protein kinase domain is found at 25-289 (FELVEVVGNG…TEQLLKFPFI (265 aa)). Residues 31 to 39 (VGNGTYGQV) and Lys-54 each bind ATP. Asp-153 functions as the Proton acceptor in the catalytic mechanism. Disordered regions lie at residues 299–347 (RIQL…NVPG), 363–383 (KSNSEALKQQQQLQQQQQRDP), and 395–862 (QRRI…GGTM). Residues 317–333 (EETEYEYSGSEEEDDSH) are compositionally biased toward acidic residues. Ser-324 and Ser-326 each carry phosphoserine. Over residues 371-380 (QQQQLQQQQQ) the composition is skewed to low complexity. Positions 396–466 (RRIEEQKEER…EEQRQSERLQ (71 aa)) are enriched in basic and acidic residues. A compositionally biased stretch (low complexity) spans 479–497 (LQQQQQQQQLQKQQQQQQQ). Omega-N-methylarginine occurs at positions 503 and 511. Basic and acidic residues predominate over residues 520-530 (AWAREVEERAR). Residues 600 to 610 (RSQSLQDQPTR) show a composition bias toward polar residues. Low complexity predominate over residues 623–633 (PAAVPTPTATP). Phosphoserine is present on Ser-644. The segment covering 673-685 (QRTSSIATALNTS) has biased composition (polar residues). 6 positions are modified to phosphoserine: Asp-702, Ser-720, Ser-729, Ser-745, Ser-746, and Ser-750. Residues 702 to 714 (DLRRSDPGWERSD) are compositionally biased toward basic and acidic residues. The segment covering 773–797 (AIGEDFVLLKERTLDEAPKPPKKAM) has biased composition (basic and acidic residues). Residues 804-820 (EEVESSEEEEEEGDGEP) show a composition bias toward acidic residues. Residues 842–1308 (MVVHDVEEIS…TLNRNCIMNW (467 aa)) form a mediates interaction with RAP2A region. Thr-867 carries the post-translational modification Phosphothreonine. The tract at residues 881–918 (GYTNLPDVVQPSHSPTENSKGQSPPTKDGGSDYQSRGL) is disordered. A compositionally biased stretch (polar residues) spans 891-905 (PSHSPTENSKGQSPP). Positions 995-1282 (NSEILCAALW…KFLCERNDKV (288 aa)) constitute a CNH domain.

It belongs to the protein kinase superfamily. STE Ser/Thr protein kinase family. STE20 subfamily. As to quaternary structure, interacts with RAP2A and TANC1. Interacts with NCK1. It depends on Mg(2+) as a cofactor. In terms of processing, autophosphorylated. Appears to be ubiquitous, expressed in all tissue types examined. Highly expressed in the brain, moderately expressed in kidney and spleen, low levels present in heart and skeletal muscle. Isoform 2 is more abundant in the brain than isoform 1.

The protein localises to the cytoplasm. It localises to the postsynaptic density. The protein resides in the cell projection. It is found in the axon. Its subcellular location is the dendrite. The catalysed reaction is L-seryl-[protein] + ATP = O-phospho-L-seryl-[protein] + ADP + H(+). It catalyses the reaction L-threonyl-[protein] + ATP = O-phospho-L-threonyl-[protein] + ADP + H(+). Serine/threonine kinase which acts as a negative regulator of Ras-related Rap2-mediated signal transduction to control neuronal structure and AMPA receptor trafficking. Required for normal synaptic density, dendrite complexity, as well as surface AMPA receptor expression in hippocampal neurons. Can activate the JNK and MAPK14/p38 pathways and mediates stimulation of the stress-activated protein kinase MAPK14/p38 MAPK downstream of the Raf/ERK pathway. Phosphorylates TANC1 upon stimulation by RAP2A, MBP and SMAD1. Has an essential function in negative selection of thymocytes, perhaps by coupling NCK1 to activation of JNK1. Activator of the Hippo signaling pathway which plays a pivotal role in organ size control and tumor suppression by restricting proliferation and promoting apoptosis. MAP4Ks act in parallel to and are partially redundant with STK3/MST2 and STK4/MST2 in the phosphorylation and activation of LATS1/2, and establish MAP4Ks as components of the expanded Hippo pathway. This chain is Misshapen-like kinase 1, found in Mus musculus (Mouse).